The following is a 211-amino-acid chain: Large ribosomal subunit protein uL3 (211 aa).

N5-methylglutamine is present on Q150.

The protein belongs to the universal ribosomal protein uL3 family. In terms of assembly, part of the 50S ribosomal subunit. Forms a cluster with proteins L14 and L19. Post-translationally, methylated by PrmB.

One of the primary rRNA binding proteins, it binds directly near the 3'-end of the 23S rRNA, where it nucleates assembly of the 50S subunit. This Pseudomonas fluorescens (strain Pf0-1) protein is Large ribosomal subunit protein uL3.